A 152-amino-acid chain; its full sequence is Pertussis toxin subunit 4 (152 aa).

Positions 1–42 (MLRRFPTRTTAPGQGGARRSRVRALAWLLASGAMTHLSPALA) are cleaved as a signal peptide. 2 disulfide bridges follow: cysteine 73–cysteine 93 and cysteine 145–cysteine 151.

Pertussis toxin contains five different chains, S1-S5. They are organized into 2 functional subunits: A, composed of S1 (which is toxic) and B, containing S2, S3, S5, and two copies of S4 (B binds to the membrane receptors). Dimers of S2-S4 and S3-S4 are held together by S5.

The protein resides in the secreted. The protein localises to the host cell membrane. In terms of biological role, PTX oligomer B binds to receptors on the eukaryotic cell surface and facilitates the translocation of the toxic subunit across the cell membrane. This is Pertussis toxin subunit 4 (ptxD) from Bordetella parapertussis (strain 12822 / ATCC BAA-587 / NCTC 13253).